The chain runs to 206 residues: Proteasome subunit beta type-2 (206 aa).

The protein belongs to the peptidase T1B family. In terms of assembly, the 26S proteasome consists of a 20S proteasome core and two 19S regulatory subunits. The 20S proteasome core is composed of 28 subunits that are arranged in four stacked rings, resulting in a barrel-shaped structure. The two end rings are each formed by seven alpha subunits, and the two central rings are each formed by seven beta subunits. The catalytic chamber with the active sites is on the inside of the barrel.

The protein resides in the cytoplasm. It localises to the nucleus. In terms of biological role, non-catalytic component of the proteasome, a multicatalytic proteinase complex which is characterized by its ability to cleave peptides with Arg, Phe, Tyr, Leu, and Glu adjacent to the leaving group at neutral or slightly basic pH. The proteasome has an ATP-dependent proteolytic activity. In Trypanosoma brucei brucei, this protein is Proteasome subunit beta type-2 (PSB4).